We begin with the raw amino-acid sequence, 397 residues long: Vacuolar protein sorting-associated protein 37A (397 aa).

Ser-18 is subject to Phosphoserine. The VPS37 C-terminal domain maps to 308 to 397 (KSTFEKKMQR…AMHSQFHAPL (90 aa)).

This sequence belongs to the VPS37 family. As to quaternary structure, component of the ESCRT-I complex (endosomal sorting complex required for transport I) which consists of TSG101, VPS28, a VPS37 protein (VPS37A to -D) and MVB12A or MVB12B in a 1:1:1:1 stoichiometry. Interacts with TSG101, VPS28 and HGS. Component of an ESCRT-I complex (endosomal sorting complex required for transport I) which consists of TSG101, VPS28, VPS37A and UBAP1 in a 1:1:1:1 stoichiometry.

It is found in the late endosome membrane. It localises to the nucleus. Its function is as follows. Component of the ESCRT-I complex, a regulator of vesicular trafficking process. Required for the sorting of endocytic ubiquitinated cargos into multivesicular bodies. May be involved in cell growth and differentiation. This chain is Vacuolar protein sorting-associated protein 37A (Vps37a), found in Mus musculus (Mouse).